A 327-amino-acid polypeptide reads, in one-letter code: Cell surface glycoprotein CD200 receptor 1 (327 aa).

An N-terminal signal peptide occupies residues 1–23; that stretch reads MLCFWRTSHVAVLLIWGVFAAES. At 24 to 239 the chain is on the extracellular side; the sequence is SCPDKNQTMQ…GRGGDQLLGS (216 aa). The 120-residue stretch at 26 to 145 folds into the Ig-like V-type domain; sequence PDKNQTMQNN…GNFQNIYDLQ (120 aa). 8 N-linked (GlcNAc...) asparagine glycosylation sites follow: Asn-29, Asn-34, Asn-43, Asn-96, Asn-159, Asn-187, Asn-192, and Asn-222. 2 disulfide bridges follow: Cys-58–Cys-129 and Cys-81–Cys-97. Residues 147 to 226 form the Ig-like C2-type domain; it reads LVPPEVTHFP…HLTTGNQSLS (80 aa). Cystine bridges form between Cys-164–Cys-213 and Cys-183–Cys-201. Residues 240–260 traverse the membrane as a helical segment; it reads YIQYIIPSIIILIIIGCICLL. At 261-327 the chain is on the cytoplasmic side; the sequence is KISGCRKCKL…DCLTLSAMGI (67 aa).

The protein belongs to the CD200R family. In terms of assembly, CD200 and CD200R1 interact via their respective N-terminal Ig-like domains. Phosphorylated on tyrosine residues. Post-translationally, highly N-glycosylated. In terms of tissue distribution, restricted to cells of the myeloid lineage.

It localises to the cell membrane. Functionally, inhibitory receptor for the CD200/OX2 cell surface glycoprotein. Limits inflammation by inhibiting the expression of pro-inflammatory molecules including TNF-alpha, interferons, and inducible nitric oxide synthase (iNOS) in response to selected stimuli. The polypeptide is Cell surface glycoprotein CD200 receptor 1 (Cd200r1) (Rattus norvegicus (Rat)).